Here is a 549-residue protein sequence, read N- to C-terminus: Lysine-specific demethylase JMJ31 (549 aa).

The JmjC domain maps to 125 to 296; that stretch reads DYRPGQIYLA…SNMPEHMDSY (172 aa). H184, D186, and H266 together coordinate Fe cation.

The protein belongs to the JARID1 histone demethylase family. Fe(2+) is required as a cofactor. As to expression, mostly expressed in leaves and inflorescences, and, to a lower extent, in roots, siliques and stems.

It localises to the nucleus. In terms of biological role, may function as histone H3 lysine demethylase and be involved in regulation of gene expression. The protein is Lysine-specific demethylase JMJ31 of Arabidopsis thaliana (Mouse-ear cress).